The primary structure comprises 584 residues: Levansucrase (584 aa).

Positions 1 to 30 (MAHVRRKVATLNMALAGSLLMVLGAQSALA) are cleaved as a signal peptide. Gln31 carries the pyrrolidone carboxylic acid modification. Positions 134, 135, 225, 308, and 309 each coordinate sucrose. The active-site Nucleophile is the Asp135. Cys339 and Cys395 are disulfide-bonded. Glu401 serves as the catalytic Proton donor/acceptor.

The protein belongs to the glycosyl hydrolase 68 family. As to quaternary structure, monomer. Post-translationally, the N-terminus is blocked. The N-terminal Gln is cyclized to a pyroglutamic acid.

The protein resides in the secreted. It catalyses the reaction [6)-beta-D-fructofuranosyl-(2-&gt;](n) alpha-D-glucopyranoside + sucrose = [6)-beta-D-fructofuranosyl-(2-&gt;](n+1) alpha-D-glucopyranoside + D-glucose. Strongly inhibited by Hg(2+) and slightly activated by Co(2+). Not inhibited by the metal ion chelator EDTA, suggesting that this enzyme does not need a metal cofactor. Functionally, catalyzes the synthesis of levan, a fructose polymer, by transferring the fructosyl moiety from sucrose to a growing acceptor molecule. Also displays sucrose hydrolase activity. In vitro, catalyzes transfructosylation from sucrose to a variety of acceptors including water (sucrose hydrolysis), glucose (exchange reaction), fructan (polymerase reaction) and sucrose (oligofructoside synthesis). Levansucrase of G.diazotrophicus SRT4, unlike the enzyme of B.subtilis, causes accumulation of large quantities of tri- and tetrasaccharides but small quantities of high-molecular-mass levan. It may act more as a sucrose hydrolase than as a fructan polymerase, and may be the key enzyme in the sucrose metabolism of G.diazotrophicus SRT4. The sequence is that of Levansucrase from Gluconacetobacter diazotrophicus (Acetobacter diazotrophicus).